A 740-amino-acid polypeptide reads, in one-letter code: Leucine-rich repeat neuronal protein 4 (740 aa).

Positions 1–18 (MRQTLPLLLLTVLRPSWA) are cleaved as a signal peptide. Residues 19-679 (DPPQEKVPLF…PCAAFTTKPS (661 aa)) lie on the Extracellular side of the membrane. A glycan (N-linked (GlcNAc...) asparagine) is linked at Asn42. 10 LRR repeats span residues 51 to 74 (LPAA…GCLP), 75 to 97 (RTLR…ELGH), 98 to 123 (LEQL…GPAG), 125 to 144 (HTLD…TGPA), 145 to 168 (LSSL…AFAC), 174 to 197 (LLNL…AFAG), 203 to 226 (LVTL…WIRD), 228 to 251 (PKLT…IFKM), 253 to 276 (PNLQ…IFQD), and 277 to 300 (TPHL…TLDS). Asn176 carries an N-linked (GlcNAc...) asparagine glycan. N-linked (GlcNAc...) asparagine glycans are attached at residues Asn289, Asn379, and Asn442. Residues 389–517 (VAPSAAPATR…QAPNPSLSEG (129 aa)) are disordered. Composition is skewed to polar residues over residues 430-454 (APST…STTR) and 490-514 (WDRS…NPSL). The region spanning 579–679 (IPDPPRLQGV…PCAAFTTKPS (101 aa)) is the Fibronectin type-III domain. An N-linked (GlcNAc...) asparagine glycan is attached at Asn622. Residues 680-700 (FALLLSGLCAASGLLLASTVV) form a helical membrane-spanning segment. At 701–740 (LSACLCRRGQTLGLQRCDTHLVAYKNPAFDDYPLGLQTVS) the chain is on the cytoplasmic side.

It localises to the membrane. Its function is as follows. May play an important role in hippocampus-dependent long-lasting memory. The sequence is that of Leucine-rich repeat neuronal protein 4 (LRRN4) from Homo sapiens (Human).